The following is a 135-amino-acid chain: Ribosome-binding factor A (135 aa).

Belongs to the RbfA family. As to quaternary structure, monomer. Binds 30S ribosomal subunits, but not 50S ribosomal subunits or 70S ribosomes.

It localises to the cytoplasm. In terms of biological role, one of several proteins that assist in the late maturation steps of the functional core of the 30S ribosomal subunit. Associates with free 30S ribosomal subunits (but not with 30S subunits that are part of 70S ribosomes or polysomes). Required for efficient processing of 16S rRNA. May interact with the 5'-terminal helix region of 16S rRNA. The polypeptide is Ribosome-binding factor A (Bartonella quintana (strain Toulouse) (Rochalimaea quintana)).